A 1404-amino-acid polypeptide reads, in one-letter code: DNA-directed RNA polymerase subunit beta' (1404 aa).

4 residues coordinate Zn(2+): cysteine 70, cysteine 72, cysteine 85, and cysteine 88. Mg(2+) contacts are provided by aspartate 460, aspartate 462, and aspartate 464. 4 residues coordinate Zn(2+): cysteine 825, cysteine 899, cysteine 906, and cysteine 909.

Belongs to the RNA polymerase beta' chain family. As to quaternary structure, the RNAP catalytic core consists of 2 alpha, 1 beta, 1 beta' and 1 omega subunit. When a sigma factor is associated with the core the holoenzyme is formed, which can initiate transcription. Mg(2+) serves as cofactor. Requires Zn(2+) as cofactor.

It carries out the reaction RNA(n) + a ribonucleoside 5'-triphosphate = RNA(n+1) + diphosphate. In terms of biological role, DNA-dependent RNA polymerase catalyzes the transcription of DNA into RNA using the four ribonucleoside triphosphates as substrates. This chain is DNA-directed RNA polymerase subunit beta', found in Nitrosomonas europaea (strain ATCC 19718 / CIP 103999 / KCTC 2705 / NBRC 14298).